We begin with the raw amino-acid sequence, 88 residues long: Small ribosomal subunit protein bS20 (88 aa).

The segment at 1 to 25 (MANSPQAKKRARQNERRAEVNKARR) is disordered. Basic and acidic residues predominate over residues 12–22 (RQNERRAEVNK).

It belongs to the bacterial ribosomal protein bS20 family.

Functionally, binds directly to 16S ribosomal RNA. This chain is Small ribosomal subunit protein bS20, found in Dinoroseobacter shibae (strain DSM 16493 / NCIMB 14021 / DFL 12).